Here is a 222-residue protein sequence, read N- to C-terminus: Ras-related protein Rab-21 (222 aa).

Ala-2 carries the post-translational modification N-acetylalanine. Residues Gly-26, Gly-29, Lys-30, Thr-31, Ser-32, Asn-43, Asp-44, His-46, Thr-48, and Thr-49 each contribute to the GTP site. Thr-31 contacts Mg(2+). A Switch 1 motif is present at residues 41-54 (KFNDKHITTLQASF). Mg(2+) is bound by residues Thr-49 and Asp-72. The Switch 2 motif lies at 74–92 (AGQERFHALGPIYYRDSNG). Positions 75, 130, 131, 133, 161, and 162 each coordinate GTP. 2 S-geranylgeranyl cysteine lipidation sites follow: Cys-218 and Cys-219. Cys-219 is subject to Cysteine methyl ester. The propeptide at 220-222 (SSG) is removed in mature form.

This sequence belongs to the small GTPase superfamily. Rab family. In terms of assembly, interacts with the cytoplasmic tail of integrins ITGA1, ITGA2, ITGA5, ITGA6, ITGA11 and ITGB1; this interaction is dependent upon its GDP/GTP cycle. Interacts with RABGEF1 (via VPS9 domain). Interacts with ANKRD27. Interacts with VAMP7. Interacts (in GTP-bound form) with VAMP8 in response to starvation; the interaction probably regulates VAMP8 endolysosomal trafficking. Interacts (active GTP-bound form) with TMED10; the interaction is indirect and regulates TMED10 abundance and localization at the Golgi. Mg(2+) is required as a cofactor.

It is found in the endoplasmic reticulum membrane. The protein resides in the golgi apparatus. It localises to the trans-Golgi network. The protein localises to the golgi apparatus membrane. Its subcellular location is the early endosome membrane. It is found in the cytoplasmic vesicle membrane. The protein resides in the cleavage furrow. It localises to the cell projection. The protein localises to the neuron projection. The catalysed reaction is GTP + H2O = GDP + phosphate + H(+). Its activity is regulated as follows. Regulated by guanine nucleotide exchange factors (GEFs) including ANKRD27 and RABGEF1, which promote the exchange of bound GDP for free GTP. Regulated by GTPase activating proteins (GAPs) which increase the GTP hydrolysis activity. Inhibited by GDP dissociation inhibitors (GDIs). Its function is as follows. The small GTPases Rab are key regulators of intracellular membrane trafficking, from the formation of transport vesicles to their fusion with membranes. Rabs cycle between an inactive GDP-bound form and an active GTP-bound form that is able to recruit to membranes different sets of downstream effectors directly responsible for vesicle formation, movement, tethering and fusion. RAB21 is involved in membrane trafficking control. Regulates integrin internalization and recycling, but does not influence the traffic of endosomally translocated receptors in general. As a result, may regulate cell adhesion and migration. During the mitosis of adherent cells, controls the endosomal trafficking of integrins which is required for the successful completion of cytokinesis. Involved in neurite growth. Following SBF2/MTMT13-mediated activation in response to starvation-induced autophagy, binds to and regulates SNARE protein VAMP8 endolysosomal transport required for SNARE-mediated autophagosome-lysosome fusion. Modulates protein levels of the cargo receptors TMED2 and TMED10, and required for appropriate Golgi localization of TMED10. This is Ras-related protein Rab-21 from Mus musculus (Mouse).